A 204-amino-acid polypeptide reads, in one-letter code: N-(5'-phosphoribosyl)anthranilate isomerase (204 aa).

Belongs to the TrpF family.

It carries out the reaction N-(5-phospho-beta-D-ribosyl)anthranilate = 1-(2-carboxyphenylamino)-1-deoxy-D-ribulose 5-phosphate. Its pathway is amino-acid biosynthesis; L-tryptophan biosynthesis; L-tryptophan from chorismate: step 3/5. This Bacillus anthracis (strain A0248) protein is N-(5'-phosphoribosyl)anthranilate isomerase.